The following is a 69-amino-acid chain: DNA-directed RNA polymerase subunit omega (69 aa).

This sequence belongs to the RNA polymerase subunit omega family. The RNAP catalytic core consists of 2 alpha, 1 beta, 1 beta' and 1 omega subunit. When a sigma factor is associated with the core the holoenzyme is formed, which can initiate transcription.

It catalyses the reaction RNA(n) + a ribonucleoside 5'-triphosphate = RNA(n+1) + diphosphate. Promotes RNA polymerase assembly. Latches the N- and C-terminal regions of the beta' subunit thereby facilitating its interaction with the beta and alpha subunits. This is DNA-directed RNA polymerase subunit omega from Geotalea uraniireducens (strain Rf4) (Geobacter uraniireducens).